A 289-amino-acid chain; its full sequence is ATP synthase subunit gamma, mitochondrial (289 aa).

It belongs to the ATPase gamma chain family. F-type ATPases have 2 components, CF(1) - the catalytic core - and CF(0) - the membrane proton channel. CF(1) has five subunits: alpha(3), beta(3), gamma(1), delta(1), epsilon(1). CF(0) has three main subunits: a, b and c.

It is found in the mitochondrion. Its subcellular location is the mitochondrion inner membrane. In terms of biological role, mitochondrial membrane ATP synthase (F(1)F(0) ATP synthase or Complex V) produces ATP from ADP in the presence of a proton gradient across the membrane which is generated by electron transport complexes of the respiratory chain. F-type ATPases consist of two structural domains, F(1) - containing the extramembraneous catalytic core, and F(0) - containing the membrane proton channel, linked together by a central stalk and a peripheral stalk. During catalysis, ATP synthesis in the catalytic domain of F(1) is coupled via a rotary mechanism of the central stalk subunits to proton translocation. Part of the complex F(1) domain and the central stalk which is part of the complex rotary element. The gamma subunit protrudes into the catalytic domain formed of alpha(3)beta(3). Rotation of the central stalk against the surrounding alpha(3)beta(3) subunits leads to hydrolysis of ATP in three separate catalytic sites on the beta subunits. In Kluyveromyces lactis (strain ATCC 8585 / CBS 2359 / DSM 70799 / NBRC 1267 / NRRL Y-1140 / WM37) (Yeast), this protein is ATP synthase subunit gamma, mitochondrial (ATP3).